The sequence spans 701 residues: MVKCGKYVLILELLLLTLLYNLIKRVSNSGETVSSFVDGYNWNIMERWKAITPKEKLEYKVNYDLGLDIDAEIGDFGDYNSDVKTDLILFKYDKTTMISTIFVYIFSPSENKFIYHTEAKLEGKIVNLMVIDLNFDGSLDALVLFKDNSSQDKFYISTFIQNENDELEEKFNTKKKETENETISDFEDQNFYFTNIHPLLCDINNDGLPDLIAQHPNKSKSFSRFIWINDGDGGFKSILWENLNIFEYTDISEISNPNSSAIVDLNGDCKADLVFTVINKKNTKRIFLEIWINKIVDGKSLYVKADEDYMLPANSMQILFADFNADGSIDMVVPTCVKSSSCNYCCTSDDKIYFIPNIQTKICENSWTKNEDNKCRLASNLCSESDFEFAKKLSPDYISLLDDKGLHFSGDASYPSYLSVGDVDDDGYLDLLVSLRNDKGQKFVRIYKNEQISNNEQNHTDIRRFYNYYQFISSLEESTPDVYNAAFFDIFENGILDVIIFGTYNSNSKIKKYSSVGFVRSNETDSLFLKSTALNGICVNDCYKEKDKISTKTLGGNAHGPTFKITVIDANGTKSSKIGIQKSQSAHSPLQLPYVLFGLGRTSNYVEEFYVGMPTHEHSYYNMWVSIIPNSHIIVIPYPLDDSNKWQIQLSVNPSNKFYSIIYITLICLSVIGVLIFILDRKEKIEDSKEEMGFKSHFVIG.

Residues 1-29 (MVKCGKYVLILELLLLTLLYNLIKRVSNS) form the signal peptide. Over 30 to 657 (GETVSSFVDG…IQLSVNPSNK (628 aa)) the chain is Extracellular. 7 N-linked (GlcNAc...) asparagine glycosylation sites follow: Asn-148, Asn-180, Asn-217, Asn-258, Asn-458, Asn-522, and Asn-571. The helical transmembrane segment at 658–678 (FYSIIYITLICLSVIGVLIFI) threads the bilayer. The Cytoplasmic segment spans residues 679–701 (LDRKEKIEDSKEEMGFKSHFVIG).

It belongs to the TIP family.

Its subcellular location is the membrane. Its function is as follows. May protect the parasite against attack by the host immune system by immunomodulation. The protein is T-cell immunomodulatory protein homolog of Plasmodium yoelii yoelii.